A 439-amino-acid polypeptide reads, in one-letter code: MQVKENKQLCLISLGCSKNLVDSEVMLGKLYNYTLTNDVKSADVILINTCGFIESAKQESIQTILNAAKDKKEGAILIASGCLSERYKDEIKELIPEVDIFTGVGDYDKIDIMIAKKQNQFSEQVFLSEHYNARIITGSSVHAYVKISEGCNQKCSFCAIPSFKGKLQSRELDSILKEVEDLALKGYKDMTFIAQDSSSFLYDKGQKDGLIQLIRAIDKQQALKSARILYLYPSSTTLELIGAIESSPIFQNYFDMPIQHISDSMLKKMRRNSSQAHHLKLLNAMKQVKESFIRSTIIVGHPEENEGEFEELSAFLDEFRFDRLNIFAFSAEENTHAYSLEKVPKKTINARIKALNKIALKHQNHSFKALLNKPIKALVENKEGEYFYKARDLRWVPEVDGEILINDSELTTPLKPGHYTIMPSAFKDNILLAKVLSPF.

Residues 7-119 enclose the MTTase N-terminal domain; sequence KQLCLISLGC…IDIMIAKKQN (113 aa). Positions 16, 50, 82, 151, 155, and 158 each coordinate [4Fe-4S] cluster. The 232-residue stretch at 137–368 folds into the Radical SAM core domain; sequence TGSSVHAYVK…ALKHQNHSFK (232 aa).

This sequence belongs to the methylthiotransferase family. RimO subfamily. [4Fe-4S] cluster is required as a cofactor.

The protein localises to the cytoplasm. It catalyses the reaction L-aspartate(89)-[ribosomal protein uS12]-hydrogen + (sulfur carrier)-SH + AH2 + 2 S-adenosyl-L-methionine = 3-methylsulfanyl-L-aspartate(89)-[ribosomal protein uS12]-hydrogen + (sulfur carrier)-H + 5'-deoxyadenosine + L-methionine + A + S-adenosyl-L-homocysteine + 2 H(+). Its function is as follows. Catalyzes the methylthiolation of an aspartic acid residue of ribosomal protein uS12. In Helicobacter pylori (strain G27), this protein is Ribosomal protein uS12 methylthiotransferase RimO.